Reading from the N-terminus, the 309-residue chain is Homoserine O-acetyltransferase (309 aa).

Cys142 acts as the Acyl-thioester intermediate in catalysis. Substrate-binding residues include Lys163 and Ser192. His235 (proton acceptor) is an active-site residue. Glu237 is a catalytic residue. Arg249 is a binding site for substrate.

Belongs to the MetA family.

The protein localises to the cytoplasm. It carries out the reaction L-homoserine + acetyl-CoA = O-acetyl-L-homoserine + CoA. Its pathway is amino-acid biosynthesis; L-methionine biosynthesis via de novo pathway; O-acetyl-L-homoserine from L-homoserine: step 1/1. Its function is as follows. Transfers an acetyl group from acetyl-CoA to L-homoserine, forming acetyl-L-homoserine. In Allorhizobium ampelinum (strain ATCC BAA-846 / DSM 112012 / S4) (Agrobacterium vitis (strain S4)), this protein is Homoserine O-acetyltransferase.